The following is a 2833-amino-acid chain: Reticulocyte-binding protein 1 (2833 aa).

The signal sequence occupies residues 1-22; the sequence is MKRGICLAALLCLFNYLGAGHG. Over residues 75-91 the composition is skewed to basic and acidic residues; sequence ETDNASGKDAEGSRPSH. 3 disordered regions span residues 75 to 95, 112 to 133, and 819 to 860; these read ETDN…DSSF, HVKE…KENE, and KHKQ…NFSR. Positions 819–836 are enriched in basic and acidic residues; the sequence is KHKQNRSEKEEEYFKNES. Residues 837-849 are compositionally biased toward acidic residues; the sequence is VEEDLSREETEEQ. Positions 2563–2565 match the Cell attachment site motif; it reads RGD. Residues 2619–2755 form a disordered region; it reads EMNSKKSAIE…GTYQDTSNSS (137 aa). 2 stretches are compositionally biased toward basic and acidic residues: residues 2621 to 2633 and 2640 to 2652; these read NSKK…EKTA and ENNR…RARV. Over residues 2655–2670 the composition is skewed to polar residues; the sequence is MSMNNDPTQSETTHSE. Residues 2706–2720 are compositionally biased toward acidic residues; the sequence is LEEEETTAPMEETEM. Positions 2731–2742 are enriched in basic and acidic residues; that stretch reads TRSDEPDMHTEN. Residues 2743–2755 show a composition bias toward polar residues; it reads TQDGTYQDTSNSS.

Homodimer.

The protein resides in the membrane. Functionally, involved in reticulocyte adhesion. Specifically binds to human reticulocyte cells. The protein is Reticulocyte-binding protein 1 (RBP1) of Plasmodium vivax (strain Belem).